Reading from the N-terminus, the 84-residue chain is Beta/gamma-crystallin (84 aa).

2 consecutive Beta/gamma crystallin 'Greek key' domains span residues 2 to 42 and 43 to 84; these read GKII…IVES and GTWF…VKQQ. Positions 64 to 84 are disordered; the sequence is KYPNPGSWGGNDDELSSVKQQ.

The protein belongs to the beta/gamma-crystallin family. In terms of assembly, monomer. Palps of larvae and otolith of the light-sensing ocellus.

Its function is as follows. Structural component of the neuroectodermal visual system. The polypeptide is Beta/gamma-crystallin (Ciona intestinalis (Transparent sea squirt)).